The chain runs to 299 residues: tRNA pseudouridine synthase B (299 aa).

Asp-45 (nucleophile) is an active-site residue.

It belongs to the pseudouridine synthase TruB family. Type 1 subfamily.

It carries out the reaction uridine(55) in tRNA = pseudouridine(55) in tRNA. Responsible for synthesis of pseudouridine from uracil-55 in the psi GC loop of transfer RNAs. The chain is tRNA pseudouridine synthase B from Streptomyces griseus subsp. griseus (strain JCM 4626 / CBS 651.72 / NBRC 13350 / KCC S-0626 / ISP 5235).